The primary structure comprises 299 residues: Zinc finger protein 414 (299 aa).

Polar residues-rich tracts occupy residues 1 to 20 and 69 to 81; these read MEEP…SSSG and DSCQ…TGVG. A disordered region spans residues 1-98; that stretch reads MEEPSRPSSD…PRRRPPPGKQ (98 aa). C2H2-type zinc fingers lie at residues 99–123 and 135–159; these read IPCS…LRTH and FRCS…GKLH. Residues 166–190 form a C2H2-type 3; degenerate zinc finger; sequence FKCENCLLRFRTHRSLFKHLHVCID. Disordered regions lie at residues 193 to 228 and 254 to 299; these read QNPA…PFPL and PRLR…GACR. The span at 203-215 shows a compositional bias: basic and acidic residues; sequence LDKEPPVPERPPE. Positions 217-228 are enriched in low complexity; the sequence is DPSSSLGLPFPL.

Belongs to the krueppel C2H2-type zinc-finger protein family.

It localises to the nucleus. Its function is as follows. May be involved in transcriptional regulation. The polypeptide is Zinc finger protein 414 (Znf414) (Mus musculus (Mouse)).